Here is a 313-residue protein sequence, read N- to C-terminus: Transaldolase (313 aa).

The Schiff-base intermediate with substrate role is filled by Lys-125.

This sequence belongs to the transaldolase family. Type 1 subfamily. In terms of assembly, homodimer.

Its subcellular location is the cytoplasm. The enzyme catalyses D-sedoheptulose 7-phosphate + D-glyceraldehyde 3-phosphate = D-erythrose 4-phosphate + beta-D-fructose 6-phosphate. It participates in carbohydrate degradation; pentose phosphate pathway; D-glyceraldehyde 3-phosphate and beta-D-fructose 6-phosphate from D-ribose 5-phosphate and D-xylulose 5-phosphate (non-oxidative stage): step 2/3. In terms of biological role, transaldolase is important for the balance of metabolites in the pentose-phosphate pathway. This is Transaldolase from Pseudomonas syringae pv. syringae (strain B728a).